We begin with the raw amino-acid sequence, 228 residues long: Ion-translocating oxidoreductase complex subunit G (228 aa).

A helical transmembrane segment spans residues 35–55 (ALSLGLVCALVAVALLLGNQL). At Thr-197 the chain carries FMN phosphoryl threonine.

This sequence belongs to the RnfG family. The complex is composed of six subunits: RnfA, RnfB, RnfC, RnfD, RnfE and RnfG. FMN serves as cofactor.

The protein localises to the cell inner membrane. Part of a membrane-bound complex that couples electron transfer with translocation of ions across the membrane. This chain is Ion-translocating oxidoreductase complex subunit G, found in Stutzerimonas stutzeri (Pseudomonas stutzeri).